We begin with the raw amino-acid sequence, 652 residues long: UvrABC system protein C (652 aa).

One can recognise a GIY-YIG domain in the interval 20–99; the sequence is PEPGCYLMRD…IKNHQPHFNV (80 aa). The region spanning 209–244 is the UVR domain; it reads DELQRLLDEQMNRYAERLDFESAARVRDQLQGLDQL.

It belongs to the UvrC family. As to quaternary structure, interacts with UvrB in an incision complex.

The protein localises to the cytoplasm. Functionally, the UvrABC repair system catalyzes the recognition and processing of DNA lesions. UvrC both incises the 5' and 3' sides of the lesion. The N-terminal half is responsible for the 3' incision and the C-terminal half is responsible for the 5' incision. This Parasynechococcus marenigrum (strain WH8102) protein is UvrABC system protein C.